A 216-amino-acid chain; its full sequence is 7-carboxy-7-deazaguanine synthase (216 aa).

Substrate contacts are provided by residues 12-14 (LQG) and Arg-27. The Radical SAM core domain maps to 18-216 (RAGRAAVFCR…LQTHKYLGIP (199 aa)). The [4Fe-4S] cluster site is built by Cys-31, Cys-46, and Cys-49. Mg(2+) is bound at residue Thr-51. Thr-93 contributes to the substrate binding site. S-adenosyl-L-methionine is bound by residues Gly-95, 136–138 (SPK), and 176–179 (QPRD). Residue Pro-216 participates in substrate binding.

The protein belongs to the radical SAM superfamily. 7-carboxy-7-deazaguanine synthase family. As to quaternary structure, homodimer. Requires [4Fe-4S] cluster as cofactor. S-adenosyl-L-methionine is required as a cofactor. Mg(2+) serves as cofactor.

The enzyme catalyses 6-carboxy-5,6,7,8-tetrahydropterin + H(+) = 7-carboxy-7-deazaguanine + NH4(+). It participates in purine metabolism; 7-cyano-7-deazaguanine biosynthesis. Functionally, catalyzes the complex heterocyclic radical-mediated conversion of 6-carboxy-5,6,7,8-tetrahydropterin (CPH4) to 7-carboxy-7-deazaguanine (CDG), a step common to the biosynthetic pathways of all 7-deazapurine-containing compounds. This chain is 7-carboxy-7-deazaguanine synthase, found in Nitratidesulfovibrio vulgaris (strain ATCC 29579 / DSM 644 / CCUG 34227 / NCIMB 8303 / VKM B-1760 / Hildenborough) (Desulfovibrio vulgaris).